The primary structure comprises 71 residues: Defensin-like protein 292 (71 aa).

3 cysteine pairs are disulfide-bonded: Cys44/Cys64, Cys50/Cys69, and Cys56/Cys71.

It belongs to the DEFL family.

The polypeptide is Defensin-like protein 292 (Arabidopsis thaliana (Mouse-ear cress)).